Reading from the N-terminus, the 374-residue chain is Tryptophan--tRNA ligase (374 aa).

Positions 81–89 (PSGPVHIGH) match the 'HIGH' region motif. The short motif at 258–262 (KMSAS) is the 'KMSKS' region element.

This sequence belongs to the class-I aminoacyl-tRNA synthetase family.

It localises to the cytoplasm. The catalysed reaction is tRNA(Trp) + L-tryptophan + ATP = L-tryptophyl-tRNA(Trp) + AMP + diphosphate + H(+). This chain is Tryptophan--tRNA ligase, found in Pyrobaculum calidifontis (strain DSM 21063 / JCM 11548 / VA1).